The primary structure comprises 947 residues: Protein translocase subunit SecA (947 aa).

ATP-binding positions include Q85, 103 to 107, and D514; that span reads GEGKT. The interval 864-947 is disordered; that stretch reads AAPSLDKGAQ…QAKGGRRRKK (84 aa). The span at 884–900 shows a compositional bias: basic and acidic residues; sequence PEIRAKGLDAPQRRDLH. Over residues 934-947 the composition is skewed to basic residues; the sequence is ERRKQAKGGRRRKK.

The protein belongs to the SecA family. In terms of assembly, monomer and homodimer. Part of the essential Sec protein translocation apparatus which comprises SecA, SecYEG and auxiliary proteins SecDF. Other proteins may also be involved.

It localises to the cell membrane. The protein resides in the cytoplasm. The enzyme catalyses ATP + H2O + cellular proteinSide 1 = ADP + phosphate + cellular proteinSide 2.. Functionally, part of the Sec protein translocase complex. Interacts with the SecYEG preprotein conducting channel. Has a central role in coupling the hydrolysis of ATP to the transfer of proteins into and across the cell membrane, serving as an ATP-driven molecular motor driving the stepwise translocation of polypeptide chains across the membrane. The sequence is that of Protein translocase subunit SecA from Streptomyces lividans.